Reading from the N-terminus, the 96-residue chain is UPF0235 protein YPK_0828 (96 aa).

This sequence belongs to the UPF0235 family.

The protein is UPF0235 protein YPK_0828 of Yersinia pseudotuberculosis serotype O:3 (strain YPIII).